We begin with the raw amino-acid sequence, 205 residues long: ATP phosphoribosyltransferase (205 aa).

This sequence belongs to the ATP phosphoribosyltransferase family. Short subfamily. In terms of assembly, heteromultimer composed of HisG and HisZ subunits.

It is found in the cytoplasm. The enzyme catalyses 1-(5-phospho-beta-D-ribosyl)-ATP + diphosphate = 5-phospho-alpha-D-ribose 1-diphosphate + ATP. It participates in amino-acid biosynthesis; L-histidine biosynthesis; L-histidine from 5-phospho-alpha-D-ribose 1-diphosphate: step 1/9. Functionally, catalyzes the condensation of ATP and 5-phosphoribose 1-diphosphate to form N'-(5'-phosphoribosyl)-ATP (PR-ATP). Has a crucial role in the pathway because the rate of histidine biosynthesis seems to be controlled primarily by regulation of HisG enzymatic activity. This chain is ATP phosphoribosyltransferase, found in Ruthia magnifica subsp. Calyptogena magnifica.